The sequence spans 724 residues: Solute carrier organic anion transporter family member 4C1 (724 aa).

At 1-105 the chain is on the cytoplasmic side; that stretch reads MKSAKGIENL…QCLQRCNTPG (105 aa). Phosphoserine occurs at positions 15, 16, 24, 26, and 28. A disordered region spans residues 24–71; sequence SASPSQVEVSALSSDPQRENSQPQELQKPQEPQKSPEPSLPSAPPNVS. Over residues 25 to 38 the composition is skewed to polar residues; sequence ASPSQVEVSALSSD. The segment covering 44 to 60 has biased composition (low complexity); it reads SQPQELQKPQEPQKSPE. The chain crosses the membrane as a helical span at residues 106 to 126; it reads GFLLHYCLLAVTQGIVVNGLV. The Extracellular portion of the chain corresponds to 127 to 145; it reads NISISTIEKRYEMKSSLTG. Residues 146-166 traverse the membrane as a helical segment; sequence LISSSYDISFCLLSLFVSFFG. The Cytoplasmic portion of the chain corresponds to 167–172; the sequence is ERGHKP. The chain crosses the membrane as a helical span at residues 173–197; the sequence is RWLAFAAFMIGLGALVFSLPQFFSG. Residues 198-224 are Extracellular-facing; that stretch reads EYKLGSLFEDTCVTTRNSTSCTSSTSS. Residues 225–254 form a helical membrane-spanning segment; the sequence is LSNYLYVFILGQLLLGAGGTPLYTLGTAFL. The Cytoplasmic segment spans residues 255–274; that stretch reads DDSVPTHKSSLYIGTGYAMS. A helical membrane pass occupies residues 275-295; sequence ILGPAIGYVLGGQLLTIYVDV. At 296–311 the chain is on the extracellular side; the sequence is AMGESTDITEDDPRWL. The chain crosses the membrane as a helical span at residues 312-336; sequence GAWWIGFLLSWIFAWSLIIPFSCFP. The Cytoplasmic segment spans residues 337–377; sequence KHLPGTAEIQAGKTSQAHQSNSNADAKFGKSIKDFPAALKN. Residues 378–399 traverse the membrane as a helical segment; sequence LMKNAVFMCLVLSTSSEALITT. Topologically, residues 400-419 are extracellular; sequence GFATFLPKFIENQFGLTSSF. The chain crosses the membrane as a helical span at residues 420-443; it reads AATLGGAVLIPGAALGQILGGFLV. Over 444–447 the chain is Cytoplasmic; that stretch reads SKFK. The chain crosses the membrane as a helical span at residues 448–471; it reads MTCKNTMKFALFTSGVALTLSFVF. Over 472 to 580 the chain is Extracellular; that stretch reads IYAKCGNEPF…ETHCAKLPIF (109 aa). A Kazal-like domain is found at 495–549; that stretch reads GNLIAPCNANCNCLRSYYYPVCGDGVQYFSPCFAGCSNSVAHRKPKVYYNCSCIE. 3 cysteine pairs are disulfide-bonded: Cys501/Cys530, Cys507/Cys526, and Cys516/Cys547. Residues 581-603 traverse the membrane as a helical segment; that stretch reads LCIFFIVIIFTFMAGTPITVSIL. Residues 604–612 lie on the Cytoplasmic side of the membrane; sequence RCVNHRQRS. Residues 613 to 638 form a helical membrane-spanning segment; it reads LALGIQFMVLRLLGTIPGPIIFGFTI. Topologically, residues 639–672 are extracellular; it reads DSTCILWDINDCGIKGACRIYDNIKMAHMLVAIS. Residues 673–690 traverse the membrane as a helical segment; the sequence is VTCKVITMFFNGFAIFLY. Residues 691-724 lie on the Cytoplasmic side of the membrane; sequence KPPPSATDLSFHKENAVVTNVLAEQDLNKIVKEG.

The protein belongs to the organo anion transporter (TC 2.A.60) family.

It localises to the basolateral cell membrane. The catalysed reaction is estrone 3-sulfate(out) = estrone 3-sulfate(in). It catalyses the reaction L-thyroxine(out) = L-thyroxine(in). The enzyme catalyses 3,3',5-triiodo-L-thyronine(out) = 3,3',5-triiodo-L-thyronine(in). It carries out the reaction chenodeoxycholate(out) = chenodeoxycholate(in). The catalysed reaction is glycocholate(out) = glycocholate(in). It catalyses the reaction L-homoarginine(in) = L-homoarginine(out). The enzyme catalyses L-arginine(in) = L-arginine(out). It carries out the reaction N(omega),N(omega)-dimethyl-L-arginine(out) = N(omega),N(omega)-dimethyl-L-arginine(in). Functionally, mediates the transport of organic anions such as steroids (estrone 3-sulfate, chenodeoxycholate, glycocholate) and thyroid hormones (3,3',5-triiodo-L-thyronine (T3), L-thyroxine (T4)), in the kidney. Capable of transporting cAMP and pharmacological substances such as digoxin, ouabain and methotrexate. Transport is independent of sodium, chloride ion, and ATP. Transport activity is stimulated by an acidic extracellular environment due to increased substrate affinity to the transporter. The driving force for this transport activity is currently not known. The role of hydrogencarbonate (HCO3(-), bicarbonate) as the probable counteranion that exchanges for organic anions is still not well defined. Functions as an uptake transporter at the apical membrane, suggesting a role in renal reabsorption. Involved in the renal secretion of the uremic toxin ADMA (N(omega),N(omega)-dimethyl-L-arginine or asymmetrical dimethylarginine), which is associated to cardiovascular events and mortality, and the structurally related amino acids L-arginine and L-homoarginine (a cardioprotective biomarker). Can act bidirectionally, suggesting a dual protective role of this transport protein; exporting L-homoarginine after being synthesized in proximal tubule cells, and mediating uptake of ADMA from the blood into proximal tubule cells where it is degraded by the enzyme dimethylarginine dimethylaminohydrolase 1 (DDAH1). May be involved in sperm maturation by enabling directed movement of organic anions and compounds within or between cells. This ion-transporting process is important to maintain the strict epididymal homeostasis necessary for sperm maturation. May have a role in secretory functions since seminal vesicle epithelial cells are assumed to secrete proteins involved in decapacitation by modifying surface proteins to facilitate the acquisition of the ability to fertilize the egg. The protein is Solute carrier organic anion transporter family member 4C1 of Pongo abelii (Sumatran orangutan).